We begin with the raw amino-acid sequence, 439 residues long: Probable serine/threonine-protein kinase WNK6 (439 aa).

Residues 1-30 are disordered; the sequence is MMPPKPAAEDVADEQPEPPDEDPDVAEADP. The span at 10 to 27 shows a compositional bias: acidic residues; the sequence is DVADEQPEPPDEDPDVAE. The 259-residue stretch at 35-293 folds into the Protein kinase domain; it reads LRYREIIGSG…ASELLKSPFL (259 aa). Residues 116-119 and lysine 166 contribute to the ATP site; that span reads TELF. The active-site Proton acceptor is aspartate 183.

The protein belongs to the protein kinase superfamily. Ser/Thr protein kinase family. WNK subfamily.

The catalysed reaction is L-seryl-[protein] + ATP = O-phospho-L-seryl-[protein] + ADP + H(+). It catalyses the reaction L-threonyl-[protein] + ATP = O-phospho-L-threonyl-[protein] + ADP + H(+). This Oryza sativa subsp. japonica (Rice) protein is Probable serine/threonine-protein kinase WNK6 (WNK6).